An 87-amino-acid chain; its full sequence is Small ribosomal subunit protein bS20 (87 aa).

The protein belongs to the bacterial ribosomal protein bS20 family.

Its function is as follows. Binds directly to 16S ribosomal RNA. This is Small ribosomal subunit protein bS20 from Clostridium botulinum (strain Alaska E43 / Type E3).